A 431-amino-acid chain; its full sequence is Peptidase B (431 aa).

2 residues coordinate Mn(2+): Lys196 and Asp201. Residue Lys208 is part of the active site. Asp219, Asp278, and Glu280 together coordinate Mn(2+). The active site involves Arg282.

This sequence belongs to the peptidase M17 family. As to quaternary structure, homohexamer. Mn(2+) is required as a cofactor.

It localises to the cytoplasm. The catalysed reaction is Release of an N-terminal amino acid, Xaa, from a peptide or arylamide. Xaa is preferably Glu or Asp but may be other amino acids, including Leu, Met, His, Cys and Gln.. Functionally, probably plays an important role in intracellular peptide degradation. This is Peptidase B from Photorhabdus laumondii subsp. laumondii (strain DSM 15139 / CIP 105565 / TT01) (Photorhabdus luminescens subsp. laumondii).